The primary structure comprises 305 residues: Mycothiol acetyltransferase (305 aa).

N-acetyltransferase domains are found at residues 10-153 (DRLD…LVVP) and 156-305 (ISLR…YARA). Glutamate 38 provides a ligand contact to 1D-myo-inositol 2-(L-cysteinylamino)-2-deoxy-alpha-D-glucopyranoside. 82–84 (LAV) provides a ligand contact to acetyl-CoA. 1D-myo-inositol 2-(L-cysteinylamino)-2-deoxy-alpha-D-glucopyranoside contacts are provided by glutamate 183, lysine 225, and glutamate 238. Acetyl-CoA is bound by residues 242-244 (VAI) and 249-255 (QGRGLGR). Tyrosine 276 is a binding site for 1D-myo-inositol 2-(L-cysteinylamino)-2-deoxy-alpha-D-glucopyranoside. Residue 281 to 286 (NESALH) coordinates acetyl-CoA.

Belongs to the acetyltransferase family. MshD subfamily. In terms of assembly, monomer.

The catalysed reaction is 1D-myo-inositol 2-(L-cysteinylamino)-2-deoxy-alpha-D-glucopyranoside + acetyl-CoA = mycothiol + CoA + H(+). Its function is as follows. Catalyzes the transfer of acetyl from acetyl-CoA to desacetylmycothiol (Cys-GlcN-Ins) to form mycothiol. The sequence is that of Mycothiol acetyltransferase from Rhodococcus jostii (strain RHA1).